A 380-amino-acid polypeptide reads, in one-letter code: Alkanesulfonate monooxygenase (380 aa).

The protein belongs to the SsuD family. Homotetramer.

The catalysed reaction is an alkanesulfonate + FMNH2 + O2 = an aldehyde + FMN + sulfite + H2O + 2 H(+). In terms of biological role, catalyzes the desulfonation of aliphatic sulfonates. The polypeptide is Alkanesulfonate monooxygenase (Pectobacterium atrosepticum (strain SCRI 1043 / ATCC BAA-672) (Erwinia carotovora subsp. atroseptica)).